A 100-amino-acid chain; its full sequence is Sec-independent protein translocase protein TatA (100 aa).

A helical membrane pass occupies residues 1-21 (MGALKPWHIAVLVVVLILLFG). A compositionally biased stretch (basic and acidic residues) spans 44-55 (KSLHDDDRDLAE). A disordered region spans residues 44-100 (KSLHDDDRDLAEKANAQAGYQPLPPQVQQEPYPQQTPYQAPPQQQPVVDPVQRARDS). Residues 69 to 81 (QVQQEPYPQQTPY) are compositionally biased toward low complexity.

This sequence belongs to the TatA/E family. The Tat system comprises two distinct complexes: a TatABC complex, containing multiple copies of TatA, TatB and TatC subunits, and a separate TatA complex, containing only TatA subunits. Substrates initially bind to the TatABC complex, which probably triggers association of the separate TatA complex to form the active translocon.

The protein localises to the cell membrane. Its function is as follows. Part of the twin-arginine translocation (Tat) system that transports large folded proteins containing a characteristic twin-arginine motif in their signal peptide across membranes. TatA could form the protein-conducting channel of the Tat system. The protein is Sec-independent protein translocase protein TatA of Salinispora arenicola (strain CNS-205).